Reading from the N-terminus, the 204-residue chain is Protease (204 aa).

Active-site residues include His-54, Asp-71, and Cys-122.

It belongs to the peptidase C5 family. Interacts with protease cofactor pVI-C; this interaction is necessary for protease activation.

It localises to the virion. The protein resides in the host nucleus. The enzyme catalyses Cleaves proteins of the adenovirus and its host cell at two consensus sites: -Yaa-Xaa-Gly-Gly-|-Xaa- and -Yaa-Xaa-Gly-Xaa-|-Gly- (in which Yaa is Met, Ile or Leu, and Xaa is any amino acid).. Its activity is regulated as follows. Requires DNA and protease cofactor for maximal activation. Inside nascent virions, becomes partially activated by binding to the viral DNA, allowing it to cleave the cofactor that binds to the protease and fully activates it. Actin, like the viral protease cofactor, seems to act as a cofactor in the cleavage of cytokeratin 18 and of actin itself. Functionally, cleaves viral precursor proteins (pTP, pIIIa, pVI, pVII, pVIII, and pX) inside newly assembled particles giving rise to mature virions. Protease complexed to its cofactor slides along the viral DNA to specifically locate and cleave the viral precursors. Mature virions have a weakened organization compared to the unmature virions, thereby facilitating subsequent uncoating. Without maturation, the particle lacks infectivity and is unable to uncoat. Late in adenovirus infection, in the cytoplasm, may participate in the cytoskeleton destruction. Cleaves host cell cytoskeletal keratins K7 and K18. The polypeptide is Protease (Bos taurus (Bovine)).